A 353-amino-acid polypeptide reads, in one-letter code: S-adenosylmethionine:tRNA ribosyltransferase-isomerase (353 aa).

This sequence belongs to the QueA family. As to quaternary structure, monomer.

The protein localises to the cytoplasm. It carries out the reaction 7-aminomethyl-7-carbaguanosine(34) in tRNA + S-adenosyl-L-methionine = epoxyqueuosine(34) in tRNA + adenine + L-methionine + 2 H(+). It participates in tRNA modification; tRNA-queuosine biosynthesis. Transfers and isomerizes the ribose moiety from AdoMet to the 7-aminomethyl group of 7-deazaguanine (preQ1-tRNA) to give epoxyqueuosine (oQ-tRNA). The sequence is that of S-adenosylmethionine:tRNA ribosyltransferase-isomerase from Sodalis glossinidius (strain morsitans).